The chain runs to 153 residues: UPF0756 membrane protein LCABL_15860 (153 aa).

Transmembrane regions (helical) follow at residues 4–24 (WLFL…SLII), 52–72 (WGVT…EIGF), 85–105 (WIAI…VGLL), and 115–135 (LVFG…GPVI).

The protein belongs to the UPF0756 family.

The protein resides in the cell membrane. The chain is UPF0756 membrane protein LCABL_15860 from Lacticaseibacillus casei (strain BL23) (Lactobacillus casei).